The following is a 60-amino-acid chain: Metallothionein A (60 aa).

The interval 1–28 (MDPCQCSKSGTCNCGGSCTCTNCSCKSC) is beta. The a divalent metal cation site is built by Cys4, Cys6, Cys12, Cys14, Cys18, Cys20, Cys23, Cys25, Cys28, Cys32, Cys33, Cys35, Cys36, Cys40, Cys43, Cys47, Cys49, Cys54, Cys58, and Cys59. Residues 29–60 (KKSCCPCCPSGCTKCASGCVCKGKTCDTSCCQ) are alpha.

It belongs to the metallothionein superfamily. Type 1 family.

Its function is as follows. Metallothioneins have a high content of cysteine residues that bind various heavy metals. In Trematomus bernacchii (Emerald rockcod), this protein is Metallothionein A (mta).